The chain runs to 792 residues: Putative cellulose synthase-like protein H3 (792 aa).

2 helical membrane-spanning segments follow: residues 25–45 (AWML…VRRA) and 55–75 (VGGA…FVWL). Positions 132-154 (GRHVRDDGGPGARAAGGDGEQGA) are disordered. A compositionally biased stretch (gly residues) spans 140 to 151 (GPGARAAGGDGE). Residues Asp181 and Asp501 contribute to the active site. A run of 6 helical transmembrane segments spans residues 579-599 (VWAV…YCLL), 613-632 (FNIT…VEYM), 650-670 (IISA…TIGL), 706-726 (VFIP…IGTW), 739-759 (GPGI…LPFV), and 768-788 (YGIP…FLFC).

Belongs to the glycosyltransferase 2 family. Plant cellulose synthase-like H subfamily.

It localises to the golgi apparatus membrane. Thought to be a Golgi-localized beta-glycan synthase that polymerize the backbones of noncellulosic polysaccharides (hemicelluloses) of plant cell wall. The sequence is that of Putative cellulose synthase-like protein H3 (CSLH3) from Oryza sativa subsp. japonica (Rice).